We begin with the raw amino-acid sequence, 917 residues long: Thiamine biosynthesis bifunctional protein ThiEC (917 aa).

The thiamine-phosphate synthase stretch occupies residues 1–243 (MSNEYPYASM…EGWKAVRGDK (243 aa)). 4-amino-2-methyl-5-(diphosphooxymethyl)pyrimidine contacts are provided by residues 48–52 (QLRAK) and Asp-84. Positions 85 and 109 each coordinate Mg(2+). Ser-128 is a 4-amino-2-methyl-5-(diphosphooxymethyl)pyrimidine binding site. 157 to 159 (STT) contributes to the 2-[(2R,5Z)-2-carboxy-4-methylthiazol-5(2H)-ylidene]ethyl phosphate binding site. Lys-160 contacts 4-amino-2-methyl-5-(diphosphooxymethyl)pyrimidine. 2-[(2R,5Z)-2-carboxy-4-methylthiazol-5(2H)-ylidene]ethyl phosphate-binding positions include Gly-196 and 216 to 217 (VS). The segment at 256–311 (PATDTQAAQEGAAKPGSEATEKKFTNAKDAKDAQKLAKQQRVDIAARGSKQRDKAH) is disordered. A phosphomethylpyrimidine synthase region spans residues 271–917 (GSEATEKKFT…GGKLYSTAQE (647 aa)). Positions 274 to 290 (ATEKKFTNAKDAKDAQK) are enriched in basic and acidic residues. 5-amino-1-(5-phospho-beta-D-ribosyl)imidazole contacts are provided by residues Asn-487, Met-516, Tyr-545, His-581, 601-603 (SRG), 642-645 (DGLR), and Glu-681. Residue His-685 participates in Zn(2+) binding. Tyr-708 serves as a coordination point for 5-amino-1-(5-phospho-beta-D-ribosyl)imidazole. His-749 contacts Zn(2+). 3 residues coordinate [4Fe-4S] cluster: Cys-829, Cys-832, and Cys-837.

The protein in the N-terminal section; belongs to the thiamine-phosphate synthase family. This sequence in the C-terminal section; belongs to the ThiC family. [4Fe-4S] cluster serves as cofactor.

It carries out the reaction 2-[(2R,5Z)-2-carboxy-4-methylthiazol-5(2H)-ylidene]ethyl phosphate + 4-amino-2-methyl-5-(diphosphooxymethyl)pyrimidine + 2 H(+) = thiamine phosphate + CO2 + diphosphate. It catalyses the reaction 2-(2-carboxy-4-methylthiazol-5-yl)ethyl phosphate + 4-amino-2-methyl-5-(diphosphooxymethyl)pyrimidine + 2 H(+) = thiamine phosphate + CO2 + diphosphate. The catalysed reaction is 4-methyl-5-(2-phosphooxyethyl)-thiazole + 4-amino-2-methyl-5-(diphosphooxymethyl)pyrimidine + H(+) = thiamine phosphate + diphosphate. The enzyme catalyses 5-amino-1-(5-phospho-beta-D-ribosyl)imidazole + S-adenosyl-L-methionine = 4-amino-2-methyl-5-(phosphooxymethyl)pyrimidine + CO + 5'-deoxyadenosine + formate + L-methionine + 3 H(+). It participates in cofactor biosynthesis; thiamine diphosphate biosynthesis; thiamine phosphate from 4-amino-2-methyl-5-diphosphomethylpyrimidine and 4-methyl-5-(2-phosphoethyl)-thiazole: step 1/1. In terms of biological role, condenses 4-methyl-5-(beta-hydroxyethyl)thiazole monophosphate (THZ-P) and 2-methyl-4-amino-5-hydroxymethyl pyrimidine pyrophosphate (HMP-PP) to form thiamine monophosphate (TMP). Its function is as follows. Catalyzes the synthesis of the hydroxymethylpyrimidine phosphate (HMP-P) moiety of thiamine from aminoimidazole ribotide (AIR) in a radical S-adenosyl-L-methionine (SAM)-dependent reaction. This is Thiamine biosynthesis bifunctional protein ThiEC (thiE/thiC) from Bifidobacterium longum (strain NCC 2705).